An 849-amino-acid polypeptide reads, in one-letter code: Villin-1 (849 aa).

Gelsolin-like repeat units follow at residues 30 to 107 (IEKS…DKFL), 147 to 213 (RVTE…EDGK), 262 to 335 (VPVE…TVEF), 405 to 475 (QEQL…PEMF), and 527 to 566 (AIQVDLAASSLNSSHCYILQAGGSFFTWLGSLSSPSDHNL). Residues 739–849 (ETPERSLRKS…AVATGTPRRL (111 aa)) form a disordered region. 2 stretches are compositionally biased toward low complexity: residues 747–782 (KSSSSSLPRRSPGTSSSEPTTPEQRAAARTFASAST) and 791–823 (PAALSPSLSTPSPSPRSRSSASSSPASWNSTPS).

Belongs to the villin/gelsolin family.

It localises to the cytoplasm. The protein localises to the cytoskeleton. In terms of biological role, ca(2+)-independent actin-binding protein. Binds actin microfilaments (MFs). Involved in actin filament bundling, severing and capping. Caps the barbed end of actin filaments and protects them from disassembly. Promotes VLN3-mediated MF severing. This Oryza sativa subsp. indica (Rice) protein is Villin-1.